We begin with the raw amino-acid sequence, 236 residues long: Phosphoribosylaminoimidazole-succinocarboxamide synthase (236 aa).

It belongs to the SAICAR synthetase family.

It catalyses the reaction 5-amino-1-(5-phospho-D-ribosyl)imidazole-4-carboxylate + L-aspartate + ATP = (2S)-2-[5-amino-1-(5-phospho-beta-D-ribosyl)imidazole-4-carboxamido]succinate + ADP + phosphate + 2 H(+). Its pathway is purine metabolism; IMP biosynthesis via de novo pathway; 5-amino-1-(5-phospho-D-ribosyl)imidazole-4-carboxamide from 5-amino-1-(5-phospho-D-ribosyl)imidazole-4-carboxylate: step 1/2. The polypeptide is Phosphoribosylaminoimidazole-succinocarboxamide synthase (purC) (Rickettsia prowazekii (strain Madrid E)).